A 447-amino-acid polypeptide reads, in one-letter code: Probable butyrate:acetyl-CoA coenzyme A-transferase (447 aa).

220–224 (GIGGT) is a binding site for CoA. E245 serves as the catalytic 5-glutamyl coenzyme A thioester intermediate. CoA is bound by residues I320 and G343.

The protein belongs to the acetyl-CoA hydrolase/transferase family.

The protein localises to the cytoplasm. The enzyme catalyses butanoate + acetyl-CoA = butanoyl-CoA + acetate. Its pathway is lipid metabolism; butanoate metabolism. Coenzyme A-transferase that converts butyrate to butyryl-CoA. Involved in the syntrophic growth of S.wolfei on butyrate in cooperation with methanogens or an appropriate hydrogen-scavenging bacterium, as part of the butyrate oxidation pathway. This chain is Probable butyrate:acetyl-CoA coenzyme A-transferase, found in Syntrophomonas wolfei subsp. wolfei (strain DSM 2245B / Goettingen).